A 255-amino-acid chain; its full sequence is Small ribosomal subunit protein eS1 (255 aa).

A compositionally biased stretch (basic residues) spans 1 to 18; it reads MAVGKNKRLSKGKKGLKK. The interval 1 to 22 is disordered; that stretch reads MAVGKNKRLSKGKKGLKKRAQD. A2 carries the post-translational modification N-acetylalanine; partial.

The protein belongs to the eukaryotic ribosomal protein eS1 family. In terms of assembly, component of the small ribosomal subunit. Mature ribosomes consist of a small (40S) and a large (60S) subunit. The 40S subunit contains about 33 different proteins and 1 molecule of RNA (18S). The 60S subunit contains about 49 different proteins and 3 molecules of RNA (25S, 5.8S and 5S).

It is found in the cytoplasm. The protein is Small ribosomal subunit protein eS1 of Uncinocarpus reesii (strain UAMH 1704).